The sequence spans 123 residues: Pre-B lymphocyte protein 3 (123 aa).

Residues 1 to 20 form the signal peptide; the sequence is MACRCLSFLLMGTFLSVSQT. One can recognise an Ig-like domain in the interval 21–123; the sequence is VLAQLDALLV…YCSVGYGFSP (103 aa). The cysteines at positions 40 and 115 are disulfide-linked.

Belongs to the immunoglobulin superfamily. In terms of tissue distribution, expressed in B-cell precursors. Expressed in fetal liver, bone marrow, spleen and lymph node.

Functionally, associates with the Ig-mu chain to form a molecular complex that is expressed on the surface of pre-B-cells. In Homo sapiens (Human), this protein is Pre-B lymphocyte protein 3 (VPREB3).